Reading from the N-terminus, the 712-residue chain is Zinc finger and BTB domain-containing protein 39 (712 aa).

In terms of domain architecture, BTB spans 30–96; sequence CDVTIVVGSR…VYTSELFTDL (67 aa). Disordered stretches follow at residues 129–162, 176–224, and 236–260; these read ARAKPLTSTSESHSGTLSCPSAEPAHPLGELRGG, SDAG…IPSM, and GIQTSTSSCQPYKVQSNGDFSKNSF. A compositionally biased stretch (polar residues) spans 134-147; sequence LTSTSESHSGTLSC. Lysine 183 participates in a covalent cross-link: Glycyl lysine isopeptide (Lys-Gly) (interchain with G-Cter in SUMO2). The C2H2-type 1 zinc finger occupies 372-394; the sequence is GNCKVCETHFQDRNSRVTHVLSH. The C2H2-type 2; atypical zinc-finger motif lies at 400–422; it reads FSCDMCETKFFTQWQLTLHRRDG. Residue lysine 439 forms a Glycyl lysine isopeptide (Lys-Gly) (interchain with G-Cter in SUMO2) linkage. A C2H2-type 3; atypical zinc finger spans residues 480 to 502; that stretch reads QACSVCDQRHLNLCSLMWHTLSH. 4 consecutive C2H2-type zinc fingers follow at residues 508–530, 538–560, 605–627, and 633–655; these read FSCSVCANSFVDWHLLEKHMAVH, FHCRLCSQSFKSEAAYRYHVSQH, YSCKVCGKRFAHTSEFNYHRRIH, and YQCKVCHKFFRGRSTIKCHLKTH. A C2H2-type 8; atypical zinc finger spans residues 661–683; sequence YRCTVCGHYSSTLNLMSKHVGVH.

It belongs to the krueppel C2H2-type zinc-finger protein family.

It is found in the nucleus. In terms of biological role, may be involved in transcriptional regulation. The sequence is that of Zinc finger and BTB domain-containing protein 39 (ZBTB39) from Homo sapiens (Human).